The sequence spans 212 residues: Large ribosomal subunit protein uL3 (212 aa).

Position 154 is an N5-methylglutamine (Q154).

This sequence belongs to the universal ribosomal protein uL3 family. Part of the 50S ribosomal subunit. Forms a cluster with proteins L14 and L19. Post-translationally, methylated by PrmB.

One of the primary rRNA binding proteins, it binds directly near the 3'-end of the 23S rRNA, where it nucleates assembly of the 50S subunit. The protein is Large ribosomal subunit protein uL3 of Hydrogenovibrio crunogenus (strain DSM 25203 / XCL-2) (Thiomicrospira crunogena).